The sequence spans 643 residues: Phosphomethylpyrimidine synthase (643 aa).

Residues Asn248, Met277, Tyr306, His342, 362–364 (SRG), 403–406 (DGLR), and Glu442 contribute to the substrate site. His446 provides a ligand contact to Zn(2+). Residue Tyr469 participates in substrate binding. A Zn(2+)-binding site is contributed by His510. 3 residues coordinate [4Fe-4S] cluster: Cys590, Cys593, and Cys598.

It belongs to the ThiC family. Homodimer. [4Fe-4S] cluster serves as cofactor.

It carries out the reaction 5-amino-1-(5-phospho-beta-D-ribosyl)imidazole + S-adenosyl-L-methionine = 4-amino-2-methyl-5-(phosphooxymethyl)pyrimidine + CO + 5'-deoxyadenosine + formate + L-methionine + 3 H(+). It functions in the pathway cofactor biosynthesis; thiamine diphosphate biosynthesis. In terms of biological role, catalyzes the synthesis of the hydroxymethylpyrimidine phosphate (HMP-P) moiety of thiamine from aminoimidazole ribotide (AIR) in a radical S-adenosyl-L-methionine (SAM)-dependent reaction. This Burkholderia multivorans (strain ATCC 17616 / 249) protein is Phosphomethylpyrimidine synthase.